A 210-amino-acid polypeptide reads, in one-letter code: S-norcoclaurine synthase (210 aa).

An N-terminal signal peptide occupies residues 1–19 (MMKMEVVFVFLMLLGTINC). 108–110 (YKE) serves as a coordination point for dopamine. Lys-122 acts as the Proton donor in catalysis. Position 141 (Asp-141) interacts with (4-hydroxyphenyl)acetaldehyde.

This sequence belongs to the BetVI family. In terms of assembly, concentration-dependent dimerization, but mainly monomeric at concentrations around 10 uM. Expressed most abundantly in the rhizomes and to a lesser extent in petioles, roots, leaves and flower buds.

It carries out the reaction (4-hydroxyphenyl)acetaldehyde + dopamine = (S)-norcoclaurine + H2O. Functionally, involved in the biosynthesis of the common precursor of all benzylisoquinoline alkaloids such as morphine, sanguinarine, codeine or berberine. Condenses dopamine and 4-hydroxyphenylacetaldehyde. The chain is S-norcoclaurine synthase from Thalictrum flavum subsp. glaucum (Yellow meadow rue).